The sequence spans 129 residues: Cytochrome b5 (129 aa).

In terms of domain architecture, Cytochrome b5 heme-binding spans 8 to 84 (TTIYTHEEVA…LEKLYIGNLK (77 aa)). Heme contacts are provided by His43 and His67. The chain crosses the membrane as a helical span at residues 104–124 (GINFPLIAVGVFLAAFGVYYY).

This sequence belongs to the cytochrome b5 family.

Its subcellular location is the endoplasmic reticulum membrane. It localises to the microsome membrane. Membrane bound hemoprotein which function as an electron carrier for several membrane bound oxygenases. This Candida tropicalis (Yeast) protein is Cytochrome b5 (Cytb5).